Reading from the N-terminus, the 367-residue chain is Serine/threonine-protein kinase-transforming protein Rmil (367 aa).

The segment at 1 to 64 is disordered; it reads EGGSTAGLSA…DSSDDWEIPD (64 aa). The span at 33-57 shows a compositional bias: basic and acidic residues; it reads QRERKSSSSSEDRNRMKTLGRRDSS. Positions 67–327 constitute a Protein kinase domain; the sequence is ITVGQRIGSG…PQILASIELL (261 aa). Residues 73–81 and lysine 93 each bind ATP; that span reads IGSGSFGTV. Aspartate 186 serves as the catalytic Proton acceptor.

Belongs to the protein kinase superfamily. TKL Ser/Thr protein kinase family. RAF subfamily.

The enzyme catalyses L-seryl-[protein] + ATP = O-phospho-L-seryl-[protein] + ADP + H(+). It catalyses the reaction L-threonyl-[protein] + ATP = O-phospho-L-threonyl-[protein] + ADP + H(+). The sequence is that of Serine/threonine-protein kinase-transforming protein Rmil (V-RMIL) from Avian retrovirus IC10.